The primary structure comprises 442 residues: Meiotically up-regulated gene 191 protein (442 aa).

Residue Thr-361 is modified to Phosphothreonine. A compositionally biased stretch (polar residues) spans 416–429 (RNNPSSGESTTLPQ). Residues 416–442 (RNNPSSGESTTLPQPSHGKKDKDCVIS) are disordered. The segment covering 433-442 (GKKDKDCVIS) has biased composition (basic and acidic residues).

The protein localises to the cytoplasm. The protein resides in the nucleus. In terms of biological role, has a role in meiosis. This chain is Meiotically up-regulated gene 191 protein (mug191), found in Schizosaccharomyces pombe (strain 972 / ATCC 24843) (Fission yeast).